A 295-amino-acid chain; its full sequence is Small ribosomal subunit protein uS2 (295 aa).

Position 2 is an N-acetylserine (serine 2). At serine 43 the chain carries Phosphoserine. Position 52 is an N6-acetyllysine (lysine 52). An interaction with PPP1R16B region spans residues 54–113 (TWEKLLLAARAIVAIENPADVSVISSRNTGQRAVLKFAAATGATPIAGRFTPGTFTNQIQ). Lysine 89 is subject to N6-acetyllysine; alternate. A Glycyl lysine isopeptide (Lys-Gly) (interchain with G-Cter in SUMO2); alternate cross-link involves residue lysine 89. A Phosphothreonine modification is found at threonine 97. 2 laminin-binding regions span residues 161–180 (IPCNNKGAHSVGLMWWMLAR) and 205–229 (RDPEEIEKEEQAAAEKAVTKEEFQG). Positions 214 to 227 (EQAAAEKAVTKEEF) are enriched in basic and acidic residues. The segment at 214–240 (EQAAAEKAVTKEEFQGEWTAPAPEFTA) is disordered. 4 [DE]-W-[ST] repeats span residues 230 to 232 (EWT), 247 to 249 (DWS), 266 to 268 (DWS), and 275 to 277 (DWS). The laminin-binding stretch occupies residues 242–295 (QPEVADWSEGVQVPSVPIQQFPTEDWSARPFTEDWSAAPTAQATEWVGTTSELS). Residues 263 to 295 (PTEDWSARPFTEDWSAAPTAQATEWVGTTSELS) are disordered. The segment covering 280 to 295 (PTAQATEWVGTTSELS) has biased composition (polar residues).

This sequence belongs to the universal ribosomal protein uS2 family. As to quaternary structure, monomer (37LRP) and homodimer (67LR). Component of the small ribosomal subunit. Mature ribosomes consist of a small (40S) and a large (60S) subunit. The 40S subunit contains about 33 different proteins and 1 molecule of RNA (18S). The 60S subunit contains about 49 different proteins and 3 molecules of RNA (28S, 5.8S and 5S). Interacts with RPS21. Interacts with several laminins including at least LAMB1. Interacts with MDK. The mature dimeric form interacts with PPP1R16B (via its fourth ankyrin repeat). Interacts with PPP1CA only in the presence of PPP1R16B. Post-translationally, acylated. Acylation may be a prerequisite for conversion of the monomeric 37 kDa laminin receptor precursor (37LRP) to the mature dimeric 67 kDa laminin receptor (67LR), and may provide a mechanism for membrane association. Cleaved by stromelysin-3 (ST3) at the cell surface. Cleavage by stromelysin-3 may be a mechanism to alter cell-extracellular matrix interactions.

The protein localises to the cell membrane. It is found in the cytoplasm. Its subcellular location is the nucleus. In terms of biological role, required for the assembly and/or stability of the 40S ribosomal subunit. Required for the processing of the 20S rRNA-precursor to mature 18S rRNA in a late step of the maturation of 40S ribosomal subunits. Also functions as a cell surface receptor for laminin. Plays a role in cell adhesion to the basement membrane and in the consequent activation of signaling transduction pathways. May play a role in cell fate determination and tissue morphogenesis. Also acts as a receptor for several other ligands, including the pathogenic prion protein, viruses, and bacteria. Acts as a PPP1R16B-dependent substrate of PPP1CA. This chain is Small ribosomal subunit protein uS2, found in Ovis aries (Sheep).